The following is a 131-amino-acid chain: Ribosome-binding factor A (131 aa).

Belongs to the RbfA family. Monomer. Binds 30S ribosomal subunits, but not 50S ribosomal subunits or 70S ribosomes.

It is found in the cytoplasm. Its function is as follows. One of several proteins that assist in the late maturation steps of the functional core of the 30S ribosomal subunit. Associates with free 30S ribosomal subunits (but not with 30S subunits that are part of 70S ribosomes or polysomes). Required for efficient processing of 16S rRNA. May interact with the 5'-terminal helix region of 16S rRNA. The chain is Ribosome-binding factor A from Thermotoga petrophila (strain ATCC BAA-488 / DSM 13995 / JCM 10881 / RKU-1).